The primary structure comprises 309 residues: Glutaminase 2 (309 aa).

Residues S65, N117, E162, N169, Y193, Y245, and V263 each coordinate substrate.

It belongs to the glutaminase family. Homotetramer.

It catalyses the reaction L-glutamine + H2O = L-glutamate + NH4(+). The polypeptide is Glutaminase 2 (Bacillus subtilis (strain 168)).